The sequence spans 150 residues: SsrA-binding protein (150 aa).

It belongs to the SmpB family.

Its subcellular location is the cytoplasm. Required for rescue of stalled ribosomes mediated by trans-translation. Binds to transfer-messenger RNA (tmRNA), required for stable association of tmRNA with ribosomes. tmRNA and SmpB together mimic tRNA shape, replacing the anticodon stem-loop with SmpB. tmRNA is encoded by the ssrA gene; the 2 termini fold to resemble tRNA(Ala) and it encodes a 'tag peptide', a short internal open reading frame. During trans-translation Ala-aminoacylated tmRNA acts like a tRNA, entering the A-site of stalled ribosomes, displacing the stalled mRNA. The ribosome then switches to translate the ORF on the tmRNA; the nascent peptide is terminated with the 'tag peptide' encoded by the tmRNA and targeted for degradation. The ribosome is freed to recommence translation, which seems to be the essential function of trans-translation. In Flavobacterium psychrophilum (strain ATCC 49511 / DSM 21280 / CIP 103535 / JIP02/86), this protein is SsrA-binding protein.